The sequence spans 642 residues: Core protein VP4 (642 aa).

Belongs to the orbivirus VP4 family.

The protein resides in the virion. The VP4 protein is one of the five proteins (with VP1, VP3, VP6 and VP7) which form the inner capsid of the virus. The polypeptide is Core protein VP4 (Segment-4) (African horse sickness virus (AHSV)).